Reading from the N-terminus, the 134-residue chain is Cystatin-1 (134 aa).

Positions 1–17 (MKAIYLILTVLCGFSAS) are cleaved as a signal peptide. The Cystatin domain occupies 21–116 (GGWRDKDVDD…CTAIIWTRSW (96 aa)). A Secondary area of contact motif is present at residues 65–69 (QVVSG). 2 disulfides stabilise this stretch: C83–C96 and C107–C127.

Belongs to the cystatin family. In terms of tissue distribution, expressed by the venom gland.

It is found in the secreted. Inhibits various C1 cysteine proteases. This protein has no toxic activity and its function in the venom is unknown. It may play a role as a housekeeping or regulatory protein. This chain is Cystatin-1, found in Chilobrachys guangxiensis (Chinese earth tiger tarantula).